An 82-amino-acid chain; its full sequence is U16-lycotoxin-Ls1b (82 aa).

The N-terminal stretch at 1-22 (MSPKVQALLLLVGLITFLEVHA) is a signal peptide. Residues 23–34 (EEELSETVESER) constitute a propeptide that is removed on maturation. Cystine bridges form between cysteine 36–cysteine 51, cysteine 43–cysteine 56, cysteine 50–cysteine 67, and cysteine 58–cysteine 65.

The protein belongs to the neurotoxin 02 (plectoxin) family. 04 (U16-lycotoxin) subfamily. Expressed by the venom gland.

The protein resides in the secreted. The polypeptide is U16-lycotoxin-Ls1b (Lycosa singoriensis (Wolf spider)).